The sequence spans 130 residues: Ribonuclease P protein component 2 (130 aa).

This sequence belongs to the eukaryotic/archaeal RNase P protein component 2 family. As to quaternary structure, consists of a catalytic RNA component and at least 4-5 protein subunits.

It is found in the cytoplasm. It carries out the reaction Endonucleolytic cleavage of RNA, removing 5'-extranucleotides from tRNA precursor.. Functionally, part of ribonuclease P, a protein complex that generates mature tRNA molecules by cleaving their 5'-ends. This is Ribonuclease P protein component 2 from Methanococcus maripaludis (strain C7 / ATCC BAA-1331).